The following is a 180-amino-acid chain: Amnesiac neuropeptides (180 aa).

Residues 1–32 (MRSFCCCFYPAAVALHCVLLFYTFFLLFRASA) form the signal peptide. 2 propeptides span residues 33 to 35 (LRR) and 152 to 180 (GRRS…GEMR). The interval 155–180 (SVPRGQPKFSRENPRALSPSLLGEMR) is disordered.

As to expression, enriched expression in the embryonic and larval nervous systems. Strongly expressed in two large neurons that project over all the lobes of the mushroom bodies.

It is found in the secreted. Required for associative learning and memory in adults. Expression pattern suggests a modulatory role in memory formation. Controls neurotransmitter-mediated signaling pathways associated with the structure of the larval peripheral nerve. The sequence is that of Amnesiac neuropeptides (amn) from Drosophila melanogaster (Fruit fly).